The primary structure comprises 299 residues: MGRTPCCDKIGLKKGPWTPEEDEVLVAHIKKNGHGSWRTLPKLAGLLRCGKSCRLRWTNYLRPDIKRGPFTADEEKLVIQLHAILGNRWAAIAAQLPGRTDNEIKNLWNTHLKKRLLSMGLDPRTHEPLPSYGLAKQAPSSPTTRHMAQWESARVEAEARLSRESMLFSPSFYSGVVKTECDHFLRIWNSEIGEAFRNLAPLDESTITSQSPCSRATSTSSALLKSSTNSWGGKEVTVAIHGSDYSPYSNDLEDDSTDSALQLLLDFPISDDDMSFLEENIDSYSQAPPIGLVSMVSKF.

HTH myb-type domains lie at 9–61 (KIGL…TNYL) and 62–116 (RPDI…KKRL). DNA-binding regions (H-T-H motif) lie at residues 37–61 (WRTLPKLAGLLRCGKSCRLRWTNYL) and 89–112 (WAAIAAQLPGRTDNEIKNLWNTHL).

In terms of assembly, interacts with LFY. In terms of tissue distribution, expressed in the shoot apex, young flower buds, developing carpels and siliques. Expressed in floral meristem, initiating floral primordia and developing flowers.

Its subcellular location is the nucleus. Functionally, transcription factor that may play a role in flower development by repressing ANT. Regulates the transition of meristem identity from vegetative growth to flowering. Acts downstream of LFY and upstream of AP1. Directly activates AP1 to promote floral fate. Together with LFY and AP1 may constitute a regulatory network that contributes to an abrupt and robust meristem identity transition. The sequence is that of Transcription factor MYB17 from Arabidopsis thaliana (Mouse-ear cress).